The sequence spans 252 residues: MLIGSHVSPQDPLAAAQAEGAEVVQIFLGNPQSWKAPKPREDAAQLKAAALPIYVHAPYLINLASANNKVRIPSRKILQQTCDAAADIGAAAVIVHGGHVADDNDLDEGFQRWRKALDQLQTDVPVYLENTAGGEHAMARHFDTIARLWDVIGDTGIGFCLDTCHAWAAGEQLVHGVDRIKAVTGRIDLVHCNDSRDAAGSGRDRHANLGAGQIDPELLVAAVRAADAPIICETAEEGRKDDIAFLREKLNS.

H56, H96, E129, D162, H165, H191, D204, H206, and E233 together coordinate Zn(2+).

The protein belongs to the AP endonuclease 2 family. The cofactor is Zn(2+).

The catalysed reaction is Endonucleolytic cleavage to 5'-phosphooligonucleotide end-products.. Endonuclease IV plays a role in DNA repair. It cleaves phosphodiester bonds at apurinic or apyrimidinic (AP) sites, generating a 3'-hydroxyl group and a 5'-terminal sugar phosphate. In Mycobacterium marinum (strain ATCC BAA-535 / M), this protein is Probable endonuclease 4.